The chain runs to 146 residues: Hemoglobin subunit beta (146 aa).

The Globin domain occupies 2 to 146 (QWSESERTII…VVSALGKQYH (145 aa)). Residues His63 and His92 each coordinate heme b.

Belongs to the globin family. As to quaternary structure, heterotetramer of two alpha chains and two beta chains. Red blood cells.

In terms of biological role, involved in oxygen transport from gills to the various peripheral tissues. The chain is Hemoglobin subunit beta (hbb) from Pogonophryne scotti (Saddleback plunderfish).